The sequence spans 121 residues: Large ribosomal subunit protein bL19 (121 aa).

The protein belongs to the bacterial ribosomal protein bL19 family.

In terms of biological role, this protein is located at the 30S-50S ribosomal subunit interface and may play a role in the structure and function of the aminoacyl-tRNA binding site. In Chlamydia muridarum (strain MoPn / Nigg), this protein is Large ribosomal subunit protein bL19 (rplS).